The chain runs to 383 residues: S-adenosylmethionine synthase (383 aa).

Histidine 16 lines the ATP pocket. Aspartate 18 contacts Mg(2+). Residue glutamate 44 participates in K(+) binding. L-methionine contacts are provided by glutamate 57 and glutamine 98. The interval 98-108 (QSPDIAMGVDI) is flexible loop. Residues 158 to 160 (DQK), 226 to 227 (RF), aspartate 235, 241 to 242 (RK), alanine 258, and lysine 262 each bind ATP. Aspartate 235 is an L-methionine binding site. Lysine 266 contributes to the L-methionine binding site.

The protein belongs to the AdoMet synthase family. Homotetramer; dimer of dimers. Mg(2+) serves as cofactor. It depends on K(+) as a cofactor.

Its subcellular location is the cytoplasm. It carries out the reaction L-methionine + ATP + H2O = S-adenosyl-L-methionine + phosphate + diphosphate. It functions in the pathway amino-acid biosynthesis; S-adenosyl-L-methionine biosynthesis; S-adenosyl-L-methionine from L-methionine: step 1/1. Functionally, catalyzes the formation of S-adenosylmethionine (AdoMet) from methionine and ATP. The overall synthetic reaction is composed of two sequential steps, AdoMet formation and the subsequent tripolyphosphate hydrolysis which occurs prior to release of AdoMet from the enzyme. The polypeptide is S-adenosylmethionine synthase (Fusobacterium nucleatum subsp. nucleatum (strain ATCC 25586 / DSM 15643 / BCRC 10681 / CIP 101130 / JCM 8532 / KCTC 2640 / LMG 13131 / VPI 4355)).